The sequence spans 906 residues: Interference hedgehog (906 aa).

An N-terminal signal peptide occupies residues 1–20 (MSPLTSSLLLFSLLTSSLEA). At 21–715 (IPVLQPSFPP…SHNETVSMSP (695 aa)) the chain is on the extracellular side. 4 consecutive Ig-like C2-type domains span residues 39 to 144 (PGVR…TARL), 134 to 236 (PLVV…ISSS), 252 to 341 (PHLL…INVT), and 346 to 433 (PRIT…LQVN). Cysteines 62 and 128 form a disulfide. N-linked (GlcNAc...) asparagine glycans are attached at residues asparagine 85, asparagine 104, asparagine 148, and asparagine 209. 2 disulfides stabilise this stretch: cysteine 173-cysteine 220 and cysteine 276-cysteine 324. N-linked (GlcNAc...) asparagine glycans are attached at residues asparagine 339 and asparagine 388. Cysteine 367 and cysteine 415 are oxidised to a cystine. Positions 427-439 (GTLLQVNPKQIQS) are enriched in polar residues. Residues 427–476 (GTLLQVNPKQIQSEPRETGSGGGFGSHRSMKPVNHGQKPTKMIPPSPPNV) form a disordered region. Fibronectin type-III domains follow at residues 470–578 (PPSP…LQPG) and 586–681 (VPEL…TQRP). Asparagine 475 carries N-linked (GlcNAc...) asparagine glycosylation. Arginine 506, lysine 512, lysine 514, and arginine 552 together coordinate heparin. Residue asparagine 568 is glycosylated (N-linked (GlcNAc...) asparagine). The disordered stretch occupies residues 673–713 (LKQGRTQRPRASTTEEPTIQGIGDRDTTSHNQPSHNETVSM). 2 stretches are compositionally biased toward polar residues: residues 676 to 689 (GRTQRPRASTTEEP) and 701 to 713 (SHNQPSHNETVSM). Residues 716–736 (MLTGTIGGGALLLILLVSAFL) traverse the membrane as a helical segment. Topologically, residues 737 to 906 (CMCRRRSPRG…SSGSLNSVGV (170 aa)) are cytoplasmic. A disordered region spans residues 789–906 (AQQQQQQLDE…SSGSLNSVGV (118 aa)). Composition is skewed to low complexity over residues 854-866 (GNNNNLNQSSEAG) and 890-906 (SSRSENLSSGSLNSVGV).

Belongs to the immunoglobulin superfamily. IHOG family. As to quaternary structure, homodimer. Heterotetramer; 2 iHog chains bind 2 hh chains when facilitated by heparin, heparin is required to promote high-affinity interactions between hh and iHog.

It is found in the membrane. In terms of biological role, mediates response to the active Hedgehog (Hh) protein signal in embryos, functioning upstream or at the level of patched (ptc). The polypeptide is Interference hedgehog (Drosophila persimilis (Fruit fly)).